The sequence spans 86 residues: uncharacterized protein (86 aa).

A helical membrane pass occupies residues 12-32 (IIFIFAIIIIVVLCVITYLYL).

Its subcellular location is the membrane. This is an uncharacterized protein from Escherichia coli (strain K12).